The following is a 420-amino-acid chain: MGMTITEKILCRHTDLDEVRPGMLINAKVDIALGNDVTAPLAIDEFRKAGGKKVFDRDKVVLIPDHFTPNKDINSAAQCKIMRDFAREQEITHYYEVGEVGVEHALLPEKGIVLPGDLVIGADSHTCTYGALGAFATGVGSTDLAAAMLTGEVWFKVPESIRFVLSGTLNPWVSGKDLILYIIGKIGVDGALYKAMEFTGDTIASLTMADRFTIANMAIEAGGKNGIFTPDEITEAYVKPRAKRPYTFYASDPDAAYAQVIEIDVNRIEPQVAFPHLPSNTKGISEVGQVPLDQVVIGSCTNGRIEDLRAAAAVLKGRKADPRVRLIVIPATQEIYRMAMKEGLFDIFLDANAAISTPTCGPCLGGHMGILAAGERALATTNRNFVGRMGHPRSEVYLSNPAVAAASAVLGRIAGPDELK.

Cysteine 300, cysteine 360, and cysteine 363 together coordinate [4Fe-4S] cluster.

It belongs to the aconitase/IPM isomerase family. LeuC type 2 subfamily. Heterodimer of LeuC and LeuD. [4Fe-4S] cluster serves as cofactor.

It catalyses the reaction (2R,3S)-3-isopropylmalate = (2S)-2-isopropylmalate. It functions in the pathway amino-acid biosynthesis; L-leucine biosynthesis; L-leucine from 3-methyl-2-oxobutanoate: step 2/4. Its function is as follows. Catalyzes the isomerization between 2-isopropylmalate and 3-isopropylmalate, via the formation of 2-isopropylmaleate. This Syntrophus aciditrophicus (strain SB) protein is 3-isopropylmalate dehydratase large subunit.